We begin with the raw amino-acid sequence, 342 residues long: scyllo-inositol 2-dehydrogenase (NAD(+)) (342 aa).

The protein belongs to the Gfo/Idh/MocA family.

It carries out the reaction scyllo-inositol + NAD(+) = scyllo-inosose + NADH + H(+). The protein operates within polyol metabolism. In terms of biological role, catalyzes the reversible NAD(+)-dependent oxidation of scyllo-inositol (SI) to 2,4,6/3,5-pentahydroxycyclohexanone (scyllo-inosose or SIS). Is required for SI catabolism that allows B.subtilis to utilize SI as the sole carbon source for growth. Cannot use NADP(+) instead of NAD(+). In Bacillus subtilis (strain 168), this protein is scyllo-inositol 2-dehydrogenase (NAD(+)).